A 227-amino-acid polypeptide reads, in one-letter code: Cytochrome c oxidase subunit 2 (227 aa).

The Mitochondrial intermembrane portion of the chain corresponds to 1 to 14 (MAYPMQLGFQDATS). A helical transmembrane segment spans residues 15–45 (PIMEELLHFHDHTLMIVFLISSLVLYIISLM). Topologically, residues 46 to 59 (LTTKLTHTSTMDAQ) are mitochondrial matrix. Residues 60–87 (EVETVWTILPAIILIMIALPSLRILYMM) form a helical membrane-spanning segment. Residues 88 to 227 (DEINNPSLTV…YFEKWSASML (140 aa)) are Mitochondrial intermembrane-facing. Positions 161, 196, 198, 200, 204, and 207 each coordinate Cu cation. Residue Glu198 participates in Mg(2+) binding. Residue Tyr218 is modified to Phosphotyrosine.

The protein belongs to the cytochrome c oxidase subunit 2 family. Component of the cytochrome c oxidase (complex IV, CIV), a multisubunit enzyme composed of 14 subunits. The complex is composed of a catalytic core of 3 subunits MT-CO1, MT-CO2 and MT-CO3, encoded in the mitochondrial DNA, and 11 supernumerary subunits COX4I, COX5A, COX5B, COX6A, COX6B, COX6C, COX7A, COX7B, COX7C, COX8 and NDUFA4, which are encoded in the nuclear genome. The complex exists as a monomer or a dimer and forms supercomplexes (SCs) in the inner mitochondrial membrane with NADH-ubiquinone oxidoreductase (complex I, CI) and ubiquinol-cytochrome c oxidoreductase (cytochrome b-c1 complex, complex III, CIII), resulting in different assemblies (supercomplex SCI(1)III(2)IV(1) and megacomplex MCI(2)III(2)IV(2)). Found in a complex with TMEM177, COA6, COX18, COX20, SCO1 and SCO2. Interacts with TMEM177 in a COX20-dependent manner. Interacts with COX20. Interacts with COX16. It depends on Cu cation as a cofactor.

It is found in the mitochondrion inner membrane. It carries out the reaction 4 Fe(II)-[cytochrome c] + O2 + 8 H(+)(in) = 4 Fe(III)-[cytochrome c] + 2 H2O + 4 H(+)(out). In terms of biological role, component of the cytochrome c oxidase, the last enzyme in the mitochondrial electron transport chain which drives oxidative phosphorylation. The respiratory chain contains 3 multisubunit complexes succinate dehydrogenase (complex II, CII), ubiquinol-cytochrome c oxidoreductase (cytochrome b-c1 complex, complex III, CIII) and cytochrome c oxidase (complex IV, CIV), that cooperate to transfer electrons derived from NADH and succinate to molecular oxygen, creating an electrochemical gradient over the inner membrane that drives transmembrane transport and the ATP synthase. Cytochrome c oxidase is the component of the respiratory chain that catalyzes the reduction of oxygen to water. Electrons originating from reduced cytochrome c in the intermembrane space (IMS) are transferred via the dinuclear copper A center (CU(A)) of subunit 2 and heme A of subunit 1 to the active site in subunit 1, a binuclear center (BNC) formed by heme A3 and copper B (CU(B)). The BNC reduces molecular oxygen to 2 water molecules using 4 electrons from cytochrome c in the IMS and 4 protons from the mitochondrial matrix. This chain is Cytochrome c oxidase subunit 2 (MT-CO2), found in Capra hircus (Goat).